Here is a 279-residue protein sequence, read N- to C-terminus: Pleckstrin homology domain-containing family F member 1 (279 aa).

The PH domain maps to 35-131 (VLLGEGVLTK…WISHIEECVR (97 aa)). The FYVE-type zinc-finger motif lies at 152–212 (DKATDICMRC…VCSLCYRELA (61 aa)). Residues Cys-158, Cys-161, Cys-175, Cys-178, Cys-183, Cys-186, Cys-204, and Cys-207 each contribute to the Zn(2+) site. Residues 218–264 (EEAEEQGAGSPGQPAHLARPICGASSGDDDDSDEDKEGSRDGDWPSS) are disordered. Positions 244–253 (GDDDDSDEDK) are enriched in acidic residues.

In terms of tissue distribution, highly expressed in heart and skeletal muscle. Weakly expressed in brain, thymus, spleen, kidney, liver, small intestine, placenta and lung.

It is found in the nucleus. The protein resides in the cytoplasm. Its subcellular location is the perinuclear region. It localises to the lysosome. Functionally, may induce apoptosis through the lysosomal-mitochondrial pathway. Translocates to the lysosome initiating the permeabilization of lysosomal membrane (LMP) and resulting in the release of CTSD and CTSL to the cytoplasm. Triggers the caspase-independent apoptosis by altering mitochondrial membrane permeabilization (MMP) resulting in the release of PDCD8. This chain is Pleckstrin homology domain-containing family F member 1 (PLEKHF1), found in Homo sapiens (Human).